A 698-amino-acid chain; its full sequence is MSQEKKVFKTEWAGRSLTIETGQLAKQANGAVLVRYGDTVVLSTATASKEPRDGDFFPLTVNYEEKMYAAGKIPGGFKKREGRPGDDATLTARLIDRPIRPLFPKGYKHDVQIMNMVLSADPDCSPQMAAMIGSSMALSVSDIPFQGPIAGVNVGYIDGKYIINPTVEEKEVSRLDLEVAGHKDAVNMVEAGASEITEQEMLEAIFFGHEEIQRLVDFQQQIVDHIQPVKQEFIPAERDEALVERIKSLTEEKGLKETVLTFDKQQRDENLDNLKEEIVNEFIDEEDPENELLIKEVYAILNELVKEEVRRLIADEKIRPDGRKPDEIRQLDSEVGILPRTHGSGLFTRGQTQALSVLTLGALGDYQLIDGLGPEEEKRFMHHYNFPNFSVGETGPVRAPGRREIGHGALGERALKYIIPDTADFPYTIRIVSEVLESNGSSSQASICGSTLALMDAGVPIKAPVAGIAMGLVTREDSYTILTDIQGMEDALGDMDFKVAGTKEGITAIQMDIKIDGLTREIIEEALEQARRGRLEIMNHMLQTIDQPRTELSAYAPKVVTMTIKPDKIRDVIGPGGKKINEIIDETGVKLDIEQDGTIFIGAVDQAMINRAREIIEEITREAEVGQTYQATVKRIEKYGAFVGLFPGKDALLHISQISKNRIEKVEDVLKIGDTIEVKITEIDKQGRVNASHRALEE.

2 residues coordinate Mg(2+): D490 and D496. The KH domain occupies 557-616 (PKVVTMTIKPDKIRDVIGPGGKKINEIIDETGVKLDIEQDGTIFIGAVDQAMINRAREII). Positions 626 to 694 (GQTYQATVKR…KQGRVNASHR (69 aa)) constitute an S1 motif domain.

Belongs to the polyribonucleotide nucleotidyltransferase family. Mg(2+) serves as cofactor.

It localises to the cytoplasm. It catalyses the reaction RNA(n+1) + phosphate = RNA(n) + a ribonucleoside 5'-diphosphate. Involved in mRNA degradation. Catalyzes the phosphorolysis of single-stranded polyribonucleotides processively in the 3'- to 5'-direction. In Staphylococcus aureus (strain bovine RF122 / ET3-1), this protein is Polyribonucleotide nucleotidyltransferase.